We begin with the raw amino-acid sequence, 107 residues long: Anti-adapter protein IraM (107 aa).

The protein belongs to the IraM/RssC family.

It is found in the cytoplasm. Its function is as follows. Inhibits RpoS proteolysis by regulating RssB activity, thereby increasing the stability of the sigma stress factor RpoS during magnesium starvation. The protein is Anti-adapter protein IraM of Escherichia coli (strain 55989 / EAEC).